Reading from the N-terminus, the 320-residue chain is Short-chain dehydrogenase TIC 32 A, chloroplastic (320 aa).

Residues 40–46 (GGTSGIG), 92–93 (DL), Asn119, and Thr140 each bind NADP(+). Ser174 is a substrate binding site. Tyr196 acts as the Proton acceptor in catalysis. The interaction with calmodulin stretch occupies residues 301 to 317 (DTTLADKLWDFSIKLVE).

Belongs to the short-chain dehydrogenases/reductases (SDR) family. In terms of assembly, part of the Tic complex. Expressed in the dehiscence zone of developing pods.

The protein resides in the plastid. It is found in the chloroplast inner membrane. Involved in protein precursor import into chloroplasts. Maybe involved in pod abscission or dehiscence (pod shatter). The protein is Short-chain dehydrogenase TIC 32 A, chloroplastic of Brassica napus (Rape).